Here is a 234-residue protein sequence, read N- to C-terminus: Large ribosomal subunit protein uL1 (234 aa).

It belongs to the universal ribosomal protein uL1 family. Part of the 50S ribosomal subunit.

Its function is as follows. Binds directly to 23S rRNA. The L1 stalk is quite mobile in the ribosome, and is involved in E site tRNA release. Protein L1 is also a translational repressor protein, it controls the translation of the L11 operon by binding to its mRNA. In Aliivibrio fischeri (strain MJ11) (Vibrio fischeri), this protein is Large ribosomal subunit protein uL1.